Consider the following 170-residue polypeptide: Cathelicidin antimicrobial peptide (170 aa).

Positions 1–30 (MKTQRDSPSLGRWSLVLLLLGLVMPLAIVA) are cleaved as a signal peptide. A propeptide spans 31–131 (QVLSYQEAVL…DISCDKDNRR (101 aa)) (cathelin-like domain (CLD)). Disulfide bonds link Cys86-Cys97 and Cys108-Cys125. The segment at 150–162 (LKKVGQKIKDFLG) is active core.

Belongs to the cathelicidin family. In terms of assembly, monomer, homodimer or homotrimer (in vitro). Oligomerizes as tetra- or hexamer in solution (in vitro). In terms of processing, proteolytically cleaved by proteinase PRTN3 into antibacterial peptide LL-37. Proteolytically cleaved by cathepsin CTSG and neutrophil elastase ELANE. Resistant to proteolytic degradation in solution, and when bound to both zwitterionic (mimicking mammalian membranes) and negatively charged membranes (mimicking bacterial membranes). Post-translationally, after secretion onto the skin surface, the CAMP gene product is processed by a serine protease-dependent mechanism into multiple novel antimicrobial peptides distinct from and shorter than cathelicidin LL-37. These peptides show enhanced antimicrobial action, acquiring the ability to kill skin pathogens such as S.aureus, E.coli and C.albicans. These peptides have lost the ability to stimulate CXCL8/IL8 release from keratinocytes. The peptides act synergistically, killing bacteria at lower concentrations when present together, and maintain activity at increased salt condition.

Its subcellular location is the secreted. The protein localises to the vesicle. Its function is as follows. Antimicrobial protein that is an integral component of the innate immune system. Binds to bacterial lipopolysaccharides (LPS). Acts via neutrophil N-formyl peptide receptors to enhance the release of CXCL2. Postsecretory processing generates multiple cathelicidin antimicrobial peptides with various lengths which act as a topical antimicrobial defense in sweat on skin. The unprocessed precursor form, cathelicidin antimicrobial peptide, inhibits the growth of Gram-negative E.coli and E.aerogenes with efficiencies comparable to that of the mature peptide LL-37 (in vitro). In terms of biological role, antimicrobial peptide that is an integral component of the innate immune system. Binds to bacterial lipopolysaccharides (LPS). Causes membrane permeabilization by forming transmembrane pores (in vitro). Causes lysis of E.coli. Exhibits antimicrobial activity against Gram-negative bacteria such as P.aeruginosa, S.typhimurium, E.aerogenes, E.coli and P.syringae, Gram-positive bacteria such as L.monocytogenes, S.epidermidis, S.pyogenes and S.aureus, as well as vancomycin-resistant enterococci (in vitro). Exhibits antimicrobial activity against methicillin-resistant S.aureus, P.mirabilis, and C.albicans in low-salt media, but not in media containing 100 mM NaCl (in vitro). Forms chiral supramolecular assemblies with quinolone signal (PQS) molecules of P.aeruginosa, which may lead to interference of bacterial quorum signaling and perturbance of bacterial biofilm formation. May form supramolecular fiber-like assemblies on bacterial membranes. Induces cytokine and chemokine producation as well as TNF/TNFA and CSF2/GMCSF production in normal human keratinocytes. Exhibits hemolytic activity against red blood cells. Functionally, exhibits antimicrobial activity against E.coli and B.megaterium (in vitro). In Papio papio (Guinea baboon), this protein is Cathelicidin antimicrobial peptide.